The sequence spans 353 residues: Rhodopsin (353 aa).

Residues 1–36 (MNGTEGPYFYVPMVNTSGIVRSPYEYPQYYLVNPAA) are Extracellular-facing. 2 N-linked (GlcNAc...) asparagine glycosylation sites follow: Asn2 and Asn15. A helical transmembrane segment spans residues 37-61 (YAALGAYMFLLILVGFPINFLTLYV). The Cytoplasmic portion of the chain corresponds to 62–73 (TIEHKKLRTPLN). A helical membrane pass occupies residues 74-96 (YILLNLAVADLFMVFGGFTTTMY). Residues 97–110 (TSMHGYFVLGRLGC) lie on the Extracellular side of the membrane. Residues Cys110 and Cys187 are joined by a disulfide bond. Residues 111–133 (NIEGFFATLGGEIALWSLVVLAI) form a helical membrane-spanning segment. Residues 134–136 (ERW) carry the 'Ionic lock' involved in activated form stabilization motif. Topologically, residues 134 to 152 (ERWVVVCKPISNFRFGENH) are cytoplasmic. Residues 153–173 (AIMGLAFTWLMALACAAPPLV) traverse the membrane as a helical segment. Residues 174–202 (GWSRYIPEGMQCSCGIDYYTRAEGFNNES) lie on the Extracellular side of the membrane. Residue Asn200 is glycosylated (N-linked (GlcNAc...) asparagine). A helical membrane pass occupies residues 203 to 224 (FVIYMFICHFSIPLLVVFFCYG). At 225 to 252 (RLLCAVKEAAAAQQESETTQRAEREVTR) the chain is on the cytoplasmic side. The chain crosses the membrane as a helical span at residues 253–274 (MVIMMVIAFLVCWLPYASVAWW). Residues 275–286 (IFTHQGSDFGPV) lie on the Extracellular side of the membrane. The chain crosses the membrane as a helical span at residues 287 to 308 (FMTIPAFFAKSSSIYNPMIYIC). At Lys296 the chain carries N6-(retinylidene)lysine. Residues 309 to 353 (LNKQFRHCMITTLCCGKNPFEEEEGASTASKTEASSVSSSSVSPA) are Cytoplasmic-facing. 2 S-palmitoyl cysteine lipidation sites follow: Cys322 and Cys323. The tract at residues 331-353 (EEGASTASKTEASSVSSSSVSPA) is disordered. Positions 334-353 (ASTASKTEASSVSSSSVSPA) are enriched in low complexity.

It belongs to the G-protein coupled receptor 1 family. Opsin subfamily. Phosphorylated on some or all of the serine and threonine residues present in the C-terminal region. Post-translationally, contains one covalently linked retinal chromophore.

Its subcellular location is the membrane. It localises to the cell projection. The protein localises to the cilium. It is found in the photoreceptor outer segment. Photoreceptor required for image-forming vision at low light intensity. While most salt water fish species use retinal as chromophore, most freshwater fish use 3-dehydroretinal, or a mixture of retinal and 3-dehydroretinal. Light-induced isomerization of 11-cis to all-trans retinal triggers a conformational change that activates signaling via G-proteins. Subsequent receptor phosphorylation mediates displacement of the bound G-protein alpha subunit by arrestin and terminates signaling. This is Rhodopsin (rho) from Diplodus vulgaris (Common two-banded seabream).